The chain runs to 189 residues: UPF0301 protein PSEEN5058 (189 aa).

It belongs to the UPF0301 (AlgH) family.

This is UPF0301 protein PSEEN5058 from Pseudomonas entomophila (strain L48).